The sequence spans 337 residues: MQFMTISNDNKIVLSIPMLSTLSLNCLVKITGSISQSKQLLVENNLLLSNFEIIYNNLVSIKRQIIYKDIFDKMFSYKLRKHPISLNSFYKDNIFYLKGMYLANLFSDKVSKNINSKCIFGMNSISDIIINMRTQKITHRNPKVLCKKINKLNKYTVDEVVEKGEIFEQSVNYIIIKDKYHPEFFVKIKFETNYIYDFFDIECLEYSCNIGDKDLKVIPKITNPNLSVGKVIDNCRNKKFRILSIGKPIIKHDCTNIIVDENGYVSGSMKNCIDRYSCYGNYILRKYRKLINDGWQCLNEVCDNPVCILAQEDFAEKMYKLRKSYDESVPQLEEVNE.

Belongs to the mimivirus R69 family.

This is an uncharacterized protein from Acanthamoeba polyphaga mimivirus (APMV).